An 87-amino-acid chain; its full sequence is Cell division topological specificity factor (87 aa).

Belongs to the MinE family.

Functionally, prevents the cell division inhibition by proteins MinC and MinD at internal division sites while permitting inhibition at polar sites. This ensures cell division at the proper site by restricting the formation of a division septum at the midpoint of the long axis of the cell. The chain is Cell division topological specificity factor from Leptothrix cholodnii (strain ATCC 51168 / LMG 8142 / SP-6) (Leptothrix discophora (strain SP-6)).